The primary structure comprises 180 residues: Type-1 fimbrial protein subunit (180 aa).

The N-terminal stretch at 1 to 22 (MKKVLLPLAALVLSATASNAMA) is a signal peptide. Cys38 and Cys78 are disulfide-bonded.

It belongs to the fimbrial protein family.

It is found in the fimbrium. Fimbriae (also called pili), polar filaments radiating from the surface of the bacterium to a length of 0.5-1.5 micrometers and numbering 100-300 per cell, enable bacteria to colonize the epithelium of specific host organs. The polypeptide is Type-1 fimbrial protein subunit (fimA) (Serratia marcescens).